The sequence spans 1049 residues: Dyslexia-associated protein KIAA0319-like protein (1049 aa).

The Cytoplasmic segment spans residues 1–29 (MEKRLGVKPNPASWILSGYYWQTSAKWLR). A helical membrane pass occupies residues 30 to 50 (SLYLFYTCFCFSVLWLSTDAS). The region spanning 49–127 (ASESRCQQGK…AFRTHSSNSM (79 aa)) is the MANSC domain. The Extracellular portion of the chain corresponds to 51–932 (ESRCQQGKTQ…DSNCEWSVLY (882 aa)). 5 N-linked (GlcNAc...) asparagine glycosylation sites follow: Asn247, Asn395, Asn472, Asn487, and Asn525. PKD domains are found at residues 312–401 (SAGE…VKPE), 409–498 (IAIV…VNKA), 504–594 (VANA…VQPE), 600–688 (QADA…VKEE), and 694–785 (IAKI…VKPD). A helical transmembrane segment spans residues 933–953 (VIIATFVIVVALGILSWTVIC). Topologically, residues 954 to 1049 (CCKRQKGKPK…KARSPREEIL (96 aa)) are cytoplasmic. Thr974 carries the phosphothreonine modification. Ser978, Ser1009, and Ser1031 each carry phosphoserine. Positions 1022–1049 (GKLLHGQNGSVPNGQTPLKARSPREEIL) are disordered. Positions 1028 to 1037 (QNGSVPNGQT) are enriched in polar residues. Thr1037 is subject to Phosphothreonine.

Interacts with RTN4R. In terms of assembly, (Microbial infection) Interacts with AAV-2 VP1. Post-translationally, N-glycosylated. Expressed in cortical neurons in the brain cortex (at protein level).

It localises to the cytoplasmic granule membrane. It is found in the golgi apparatus membrane. The protein localises to the golgi apparatus. The protein resides in the trans-Golgi network membrane. Its subcellular location is the cell membrane. Possible role in axon guidance through interaction with RTN4R. Its function is as follows. (Microbial infection) Acts as a receptor for adeno-associated virus and is involved in adeno-associated virus infection through endocytosis system. The protein is Dyslexia-associated protein KIAA0319-like protein of Homo sapiens (Human).